The chain runs to 695 residues: Probable pre-mRNA-splicing factor ATP-dependent RNA helicase DEAH9 (695 aa).

The region spanning 58–223 is the Helicase ATP-binding domain; the sequence is LYLVENHATT…FNSSKKRHAP (166 aa). ATP is bound at residue 71–78; that stretch reads GETGSGKT. The DEAH box signature appears at 170 to 173; that stretch reads DEAH. Residues 261–438 form the Helicase C-terminal domain; it reads SVVSTILLIN…STVIQLKALG (178 aa).

It belongs to the DEAD box helicase family. DEAH subfamily. DDX35 sub-subfamily.

It carries out the reaction ATP + H2O = ADP + phosphate + H(+). In terms of biological role, may be involved in pre-mRNA splicing. This is Probable pre-mRNA-splicing factor ATP-dependent RNA helicase DEAH9 from Arabidopsis thaliana (Mouse-ear cress).